We begin with the raw amino-acid sequence, 177 residues long: Large ribosomal subunit protein uL6 (177 aa).

This sequence belongs to the universal ribosomal protein uL6 family. As to quaternary structure, part of the 50S ribosomal subunit.

This protein binds to the 23S rRNA, and is important in its secondary structure. It is located near the subunit interface in the base of the L7/L12 stalk, and near the tRNA binding site of the peptidyltransferase center. This chain is Large ribosomal subunit protein uL6, found in Bartonella henselae (strain ATCC 49882 / DSM 28221 / CCUG 30454 / Houston 1) (Rochalimaea henselae).